Reading from the N-terminus, the 1334-residue chain is Adenylate cyclase type 9 (1334 aa).

2 disordered regions span residues 1–28 (MASP…SNSV) and 49–71 (ISSS…GLRR). Over 1–113 (MASPPHQQLL…CFPQTQRRFR (113 aa)) the chain is Cytoplasmic. Polar residues predominate over residues 16-28 (EVSCDSSGDSNSV). The span at 57-69 (ESGGVGRGGGGGL) shows a compositional bias: gly residues. Residues 114–134 (YALFYIGSACLLWGIYFGVHM) form a helical membrane-spanning segment. Residues 135–137 (REK) are Extracellular-facing. Residues 138-158 (QMVFMVPALCFLLVCVAFFAF) traverse the membrane as a helical segment. The Cytoplasmic portion of the chain corresponds to 159 to 167 (TFTKAYARR). The helical transmembrane segment at 168–187 (YVWTSGYTLLVFALTLAPQF) threads the bilayer. The Extracellular portion of the chain corresponds to 188–207 (QPWTLGERQRVQPRPAAPVD). Residues 208–227 (TCLSQVGSFSMCVEVLLLLY) form a helical membrane-spanning segment. Residues 228-233 (TVMHLP) lie on the Cytoplasmic side of the membrane. Residues 234 to 250 (LYLSLFLGLSYSVLFET) form a helical membrane-spanning segment. The Extracellular segment spans residues 251–269 (SAFRDESCTLLGGGAVYWE). Residues 270–290 (LLSKAFLHVCIHAIGIHLFIM) form a helical membrane-spanning segment. Topologically, residues 291–768 (SEVRSRSTFL…VKTFASATFS (478 aa)) are cytoplasmic. Residues 338–363 (QGDDESENSVKRHSTSSPKNRKKKPS) form a disordered region. A compositionally biased stretch (basic residues) spans 348-363 (KRHSTSSPKNRKKKPS). D388, I389, and D432 together coordinate Mg(2+). Residues 388 to 393 (DIVGFT), 430 to 432 (LGD), and R476 each bind ATP. Positions 635 to 670 (GCQDEHKNSTKAPGGHSPKTQNGLLSPPQEEKLSNS) are disordered. The helical transmembrane segment at 769-789 (SLLDVFLSTTVFLILSVTCFL) threads the bilayer. The Extracellular portion of the chain corresponds to 790-800 (KHGMVASPPPP). A helical transmembrane segment spans residues 801–821 (AAVVVFVIAILLEVLSLVISV). Residues 822–849 (RMVFFLEEVMACTKRLLELISGWLPRHF) are Cytoplasmic-facing. The chain crosses the membrane as a helical span at residues 850–870 (LGAILVSLPALAVFSHFTSDF). At 871–873 (ETN) the chain is on the extracellular side. A helical membrane pass occupies residues 874 to 894 (IHYTMFMCCAILIAIVQYCNF). At 895–902 (CQLSSWMR) the chain is on the cytoplasmic side. Residues 903–923 (SLLATVVGAVLLILLYVSLCP) traverse the membrane as a helical segment. Residues 924–957 (DSSVETLHLDLAQNLSSRKSPCNSSMPADVKRPA) lie on the Extracellular side of the membrane. N-linked (GlcNAc...) asparagine glycosylation is found at N937 and N946. A helical transmembrane segment spans residues 958-978 (DLIGQEVILAVFLLLLLVWFL). Residues 979–1334 (NRSFEVSYRL…LTKLNVSKSV (356 aa)) are Cytoplasmic-facing. Residues K1090, 1167-1169 (DIW), 1174-1178 (NIASR), and K1214 each bind ATP. Positions 1266-1303 (SVQNSDKTAHATDNSETKDALPSSKKLQKEPTKAEERC) are disordered. Basic and acidic residues-rich tracts occupy residues 1272–1284 (KTAH…ETKD) and 1292–1303 (LQKEPTKAEERC).

This sequence belongs to the adenylyl cyclase class-4/guanylyl cyclase family. Mg(2+) is required as a cofactor. The cofactor is Mn(2+). Detected in embryonic heart (at protein level).

The protein resides in the cell membrane. It is found in the membrane. The enzyme catalyses ATP = 3',5'-cyclic AMP + diphosphate. Insensitive to calcium/calmodulin, forskolin and somatostatin. Stimulated by beta-adrenergic receptor activation. Activity is down-regulated by calcium/calcineurin. Functionally, adenylyl cyclase that catalyzes the formation of the signaling molecule cAMP in response to activation of G protein-coupled receptors. This is Adenylate cyclase type 9 (ADCY9) from Gallus gallus (Chicken).